Reading from the N-terminus, the 73-residue chain is RNA-binding protein Hfq (73 aa).

Residues 8-68 enclose the Sm domain; that stretch reads DQFLNQIRKD…ISTFAPQKNV (61 aa).

The protein belongs to the Hfq family. In terms of assembly, homohexamer.

Its function is as follows. RNA chaperone that binds small regulatory RNA (sRNAs) and mRNAs to facilitate mRNA translational regulation in response to envelope stress, environmental stress and changes in metabolite concentrations. Also binds with high specificity to tRNAs. The sequence is that of RNA-binding protein Hfq from Bacillus velezensis (strain DSM 23117 / BGSC 10A6 / LMG 26770 / FZB42) (Bacillus amyloliquefaciens subsp. plantarum).